The following is a 151-amino-acid chain: 1,4-dihydroxy-2-naphthoyl-CoA hydrolase (151 aa).

Asp-19 is a catalytic residue.

This sequence belongs to the 4-hydroxybenzoyl-CoA thioesterase family. DHNA-CoA hydrolase subfamily.

The catalysed reaction is 1,4-dihydroxy-2-naphthoyl-CoA + H2O = 1,4-dihydroxy-2-naphthoate + CoA + H(+). The protein operates within cofactor biosynthesis; phylloquinone biosynthesis. Its pathway is quinol/quinone metabolism; 1,4-dihydroxy-2-naphthoate biosynthesis; 1,4-dihydroxy-2-naphthoate from chorismate: step 7/7. Its function is as follows. Catalyzes the hydrolysis of 1,4-dihydroxy-2-naphthoyl-CoA (DHNA-CoA) to 1,4-dihydroxy-2-naphthoate (DHNA), a reaction involved in phylloquinone (vitamin K1) biosynthesis. In Prochlorococcus marinus (strain MIT 9303), this protein is 1,4-dihydroxy-2-naphthoyl-CoA hydrolase.